A 247-amino-acid chain; its full sequence is Peroxisomal membrane protein 11A (247 aa).

At 1 to 83 (MDAFTRFTNQ…SIHATDLVPR (83 aa)) the chain is on the cytoplasmic side. Residues 84–105 (LCLTLANLNRVIYFICDTILWV) form a helical membrane-spanning segment. Residues 106–219 (RSVGLTSGIN…DQLGIYKSNP (114 aa)) lie on the Lumenal side of the membrane. A helical transmembrane segment spans residues 220–239 (GIIGLGGLVSSIAGMITVAY). The required for homodimerization, interaction with PEX11G, and peroxisomal localization stretch occupies residues 220–239 (GIIGLGGLVSSIAGMITVAY). Residues 240–247 (PQMKLKTR) lie on the Cytoplasmic side of the membrane.

It belongs to the peroxin-11 family. In terms of assembly, homodimer. Heterodimer with PEX11G. Probably interacts with COPB2 and COPA. Interacts with PEX19. Interacts with FIS1. Post-translationally, seems not to be N-glycosylated.

It is found in the peroxisome membrane. Its function is as follows. May be involved in peroxisomal proliferation and may regulate peroxisomes division. May mediate binding of coatomer proteins to the peroxisomal membrane. Promotes membrane protrusion and elongation on the peroxisomal surface. The sequence is that of Peroxisomal membrane protein 11A (PEX11A) from Homo sapiens (Human).